Reading from the N-terminus, the 201-residue chain is L(+)-tartrate dehydratase subunit beta (201 aa).

Histidine 37 is a catalytic residue.

Belongs to the class-I fumarase family. In terms of assembly, heterotetramer of two alpha and two beta subunits.

It catalyses the reaction (2R,3R)-tartrate = oxaloacetate + H2O. This chain is L(+)-tartrate dehydratase subunit beta (ttdB), found in Shigella boydii serotype 4 (strain Sb227).